Reading from the N-terminus, the 186-residue chain is Peptidyl-tRNA hydrolase (186 aa).

Tyr-14 lines the tRNA pocket. The active-site Proton acceptor is the His-19. TRNA contacts are provided by Tyr-61, Asn-63, and Asn-107.

This sequence belongs to the PTH family. In terms of assembly, monomer.

It is found in the cytoplasm. The catalysed reaction is an N-acyl-L-alpha-aminoacyl-tRNA + H2O = an N-acyl-L-amino acid + a tRNA + H(+). Functionally, hydrolyzes ribosome-free peptidyl-tRNAs (with 1 or more amino acids incorporated), which drop off the ribosome during protein synthesis, or as a result of ribosome stalling. Catalyzes the release of premature peptidyl moieties from peptidyl-tRNA molecules trapped in stalled 50S ribosomal subunits, and thus maintains levels of free tRNAs and 50S ribosomes. The chain is Peptidyl-tRNA hydrolase from Helicobacter pylori (strain J99 / ATCC 700824) (Campylobacter pylori J99).